The following is a 202-amino-acid chain: Oxopyrrolidines biosynthesis cluster protein O (202 aa).

Functionally, part of the gene cluster that mediates the biosynthesis of oxopyrrolidines, polyketide-amino acid hybrid compounds with feature structures of tetramic acid. Does not seem to play a role in oxopyrrolidines A and B biosynthesis. In Penicillium oxalicum (strain 114-2 / CGMCC 5302) (Penicillium decumbens), this protein is Oxopyrrolidines biosynthesis cluster protein O.